We begin with the raw amino-acid sequence, 225 residues long: Lipoarabinomannan carrier protein LprG (225 aa).

A signal peptide spans 1–21 (MRNRIRLALIPVAVAAIALAG). Cys-22 carries N-palmitoyl cysteine lipidation. Cys-22 carries S-diacylglycerol cysteine lipidation.

Belongs to the LppX/LprAFG lipoprotein family. Post-translationally, modified by Lgt on Cys-22 with an S-linked diacylglyceral, signal peptide is removed by LspA, Cys-22 is further modifed with a fatty acid on its amino group by Lnt yielding a triacylated protein.

It is found in the cell inner membrane. Functionally, helps membrane protein MAB_2807 (P55) transport triacylglycerides (TAG) across the inner cell membrane into the periplasm and probably ultimately to the outer membrane. Binds TAG in its hydrophobic cavity and transfers it between lipid bilayers. TAG probably regulates lipid metabolism and growth regulation and plays a structural role in the outer membrane. Also binds mannosides, lipoarabinomannan and lipomannan and various glycolipids in the same cavity. This chain is Lipoarabinomannan carrier protein LprG, found in Mycobacteroides abscessus (strain ATCC 19977 / DSM 44196 / CCUG 20993 / CIP 104536 / JCM 13569 / NCTC 13031 / TMC 1543 / L948) (Mycobacterium abscessus).